The primary structure comprises 225 residues: UPF0173 metal-dependent hydrolase Pars_0810 (225 aa).

It belongs to the UPF0173 family.

The protein is UPF0173 metal-dependent hydrolase Pars_0810 of Pyrobaculum arsenaticum (strain DSM 13514 / JCM 11321 / PZ6).